Here is a 106-residue protein sequence, read N- to C-terminus: Putative cytochrome c oxidase subunit 7A3, mitochondrial (106 aa).

A mitochondrion-targeting transit peptide spans 1-23; it reads MLWNLLALHQIGQRTISTASHRH.

This sequence belongs to the cytochrome c oxidase VIIa family.

It localises to the mitochondrion inner membrane. The sequence is that of Putative cytochrome c oxidase subunit 7A3, mitochondrial (COX7A2P2) from Homo sapiens (Human).